A 1492-amino-acid polypeptide reads, in one-letter code: MFSFVDSRTLVLFAATQVILLAVVRCQDEEDVLATGSCVQHGQRYSDKDVWKPEPCQICVCDTGNVLCDEIICEDPKDCPNAEIPFGECCPICPTEQSSTSSGQGVLKGQKGEPGDIKDVVGPKGPPGPQGPSGEQGPRGDRGDKGEKGAPGPRGRDGEPGTPGNPGPVGPPGPPGPPGLGGNFAAQMTGGFDEKAGGAQMGVMQGPMGPMGPRGPPGPTGAPGPQGFQGNPGEPGEPGAGGPMGPRGPPGPAGKPGDDGEAGKPGKSGERGPPGPQGARGFPGTPGLPGVKGHRGYPGLDGSKGEAGAAGAKGEGGATGEAGSPGPMGPRGLPGERGRPGASGAAGARGNDGLPGPAGPPGPVGPAGAPGFPGAPGSKGEAGPTGARGPEGAQGPRGESGTPGSPGPAGASGNPGTDGIPGAKGSSGAPGIAGAPGFPGPRGPPGPQGATGPLGPKGQTGDPGVAGFKGEHGPKGEIGSAGPQGAPGPAGEEGKRGARGEPGAAGPLGPPGERGAPGNRGFPGQDGLAGPKGAPGERGVPGLGGPKGANGDPGRPGEPGLPGARGLTGRPGDAGPQGKVGPSGASGEDGRPGPPGPQGARGQPGVMGFPGPKGANGEPGKAGEKGLLGAPGLRGLPGKDGETGAQGPNGPAGPAGERGEQGPPGPSGFQGLPGPPGSPGEGGKPGDQGVPGEAGAPGLVGPRGERGFPGERGSSGPQGLQGPRGLPGTPGTDGPKGATGPSGPNGAQGPPGLQGMPGERGAAGISGPKGDRGDTGEKGPEGAPGKDGSRGLTGPIGPPGPSGPNGEKGESGPSGPAGIVGARGAPGDRGETGPPGPAGFAGPPGADGQAGLKGDQGESGQKGDAGAPGPQGPSGAPGPQGPTGVNGPKGARGAQGPPGATGFPGAAGRVGPPGPNGNPGPSGAPGSAGKEGPKGARGDAGPTGRAGDPGLQGPAGVPGEKGESGEDGPSGPDGPPGPQGLSGQRGIVGLPGQRGERGFPGLPGPSGEPGKQGGPGSAGDRGPPGPVGPPGLTGPAGEPGREGNAGSDGPPGRDGATGIKGDRGETGPLGAPGAPGAPGAPGPVGPTGKQGDRGESGPQGPLGPSGPAGARGLPGPQGPRGDKGEAGEAGERGQKGHRGFTGLQGLPGPPGTAGDQGASGPAGPGGPRGPPGPVGPSGKDGSNGLPGPIGPPGPRGRGGETGPAGPPGQPGPPGPPGPPGPGIDMSAFAGLSQPEKGPDPMRYMRADQASSSVPQRDVDVEATLKSLNNQIESIRSPDGTKKNPARTCRDLKLCHPEWKSGDYWIDPNQGCTVDAIKVFCNMETGETCVYPNPSKIPKKNWWSAKGKEKKHIWFGETINGGFQFSYGDDSSAPNTANIQMTFLRLLSTDATQNITYHCKNSIAFMDEASGNLKKAVLLQGSNDVEIRAEGNSRFTYNALEDGCKKHTGKWSKTVIEYRTQKTSRLPIVDIAPMDIGGADQEFGVDIGPVCFL.

A signal peptide spans 1 to 26; the sequence is MFSFVDSRTLVLFAATQVILLAVVRC. Residues 27 to 186 constitute a propeptide, N-terminal propeptide; sequence QDEEDVLATG…PPGLGGNFAA (160 aa). The VWFC domain maps to 36 to 94; it reads GSCVQHGQRYSDKDVWKPEPCQICVCDTGNVLCDEIICEDPKDCPNAEIPFGECCPICP. Residues 98–1255 form a disordered region; that stretch reads SSTSSGQGVL…ADQASSSVPQ (1158 aa). Composition is skewed to basic and acidic residues over residues 110–121 and 138–159; these read QKGEPGDIKDVV and PRGD…RDGE. Positions 163 to 178 are enriched in pro residues; that stretch reads PGNPGPVGPPGPPGPP. The segment covering 197-208 has biased composition (low complexity); it reads GGAQMGVMQGPM. Residues 206 to 1219 form a triple-helical region region; it reads GPMGPMGPRG…PGPPGPPGPP (1014 aa). Over residues 213–222 the composition is skewed to pro residues; sequence PRGPPGPTGA. Residues 223 to 234 are compositionally biased toward low complexity; it reads PGPQGFQGNPGE. Residues 236-245 are compositionally biased toward gly residues; that stretch reads GEPGAGGPMG. Positions 256–270 are enriched in basic and acidic residues; the sequence is PGDDGEAGKPGKSGE. Over residues 311-320 the composition is skewed to gly residues; sequence GAKGEGGATG. Low complexity-rich tracts occupy residues 321 to 333, 340 to 355, 366 to 376, and 396 to 436; these read EAGS…PRGL, PGAS…DGLP, PAGAPGFPGAP, and PRGE…AGAP. Residues 438 to 447 are compositionally biased toward pro residues; the sequence is FPGPRGPPGP. Composition is skewed to low complexity over residues 480 to 490 and 501 to 517; these read SAGPQGAPGPA and EPGA…RGAP. The segment covering 539–548 has biased composition (gly residues); that stretch reads GVPGLGGPKG. Composition is skewed to low complexity over residues 627–636 and 645–655; these read LLGAPGLRGL and AQGPNGPAGPA. A 4-hydroxyproline mark is found at P664 and P673. P675 bears the 3-hydroxyproline mark. 4-hydroxyproline occurs at positions 676 and 679. The segment covering 711 to 741 has biased composition (low complexity); sequence ERGSSGPQGLQGPRGLPGTPGTDGPKGATGP. Positions 769-780 are enriched in basic and acidic residues; it reads KGDRGDTGEKGP. Composition is skewed to low complexity over residues 838 to 850 and 894 to 910; these read AGFA…DGQA and AQGP…AGRV. Residue P912 is modified to 3-hydroxyproline. 4-hydroxyproline is present on residues P913, P919, and P925. Over residues 919-930 the composition is skewed to low complexity; sequence PGPSGAPGSAGK. Residues 1010-1019 are compositionally biased toward gly residues; the sequence is GKQGGPGSAG. Residues 1105 to 1114 are compositionally biased toward low complexity; the sequence is SGPAGARGLP. The span at 1120-1134 shows a compositional bias: basic and acidic residues; it reads RGDKGEAGEAGERGQ. Composition is skewed to low complexity over residues 1140–1159 and 1176–1186; these read FTGL…QGAS and PSGKDGSNGLP. P1149 carries the 3-hydroxyproline modification. A 4-hydroxyproline modification is found at P1186. At P1191 the chain carries 3-hydroxyproline. P1192 bears the 4-hydroxyproline mark. Positions 1204–1221 are enriched in pro residues; that stretch reads AGPPGQPGPPGPPGPPGP. Residue P1206 is modified to 3-hydroxyproline. Residues P1207 and P1210 each carry the 4-hydroxyproline modification. Residue P1212 is modified to 3-hydroxyproline. P1213 and P1216 each carry 4-hydroxyproline. A 3-hydroxyproline modification is found at P1218. The residue at position 1219 (P1219) is a 4-hydroxyproline. Residues 1220–1246 form a nonhelical region (C-terminal) region; sequence GPGIDMSAFAGLSQPEKGPDPMRYMRA. A compositionally biased stretch (basic and acidic residues) spans 1236–1245; that stretch reads KGPDPMRYMR. A propeptide spans 1247-1492 (C-terminal propeptide); the sequence is DQASSSVPQR…GVDIGPVCFL (246 aa). The region spanning 1258–1492 is the Fibrillar collagen NC1 domain; that stretch reads VDVEATLKSL…GVDIGPVCFL (235 aa). 3 disulfides stabilise this stretch: C1288–C1320, C1328–C1490, and C1398–C1443. 5 residues coordinate Ca(2+): D1306, N1308, Q1309, C1311, and D1314. N1393 is a glycosylation site (N-linked (GlcNAc...) asparagine).

It belongs to the fibrillar collagen family. In terms of assembly, homotrimers of alpha 1(II) chains. Contains mostly 4-hydroxyproline. Prolines at the third position of the tripeptide repeating unit (G-X-P) are 4-hydroxylated in some or all of the chains. Post-translationally, contains 3-hydroxyproline at a few sites. This modification occurs on the first proline residue in the sequence motif Gly-Pro-Hyp, where Hyp is 4-hydroxyproline. In terms of processing, lysine residues at the third position of the tripeptide repeating unit (G-X-Y) are 5-hydroxylated in some or all of the chains. O-glycosylated on hydroxylated lysine residues. The O-linked glycan consists of a Glc-Gal disaccharide.

Its subcellular location is the secreted. The protein resides in the extracellular space. It is found in the extracellular matrix. Functionally, type II collagen is specific for cartilaginous tissues. It is essential for the normal embryonic development of the skeleton, for linear growth and for the ability of cartilage to resist compressive forces. This is Collagen alpha-1(II) chain from Xenopus tropicalis (Western clawed frog).